A 74-amino-acid chain; its full sequence is Serine rich endogenous peptide 16 (74 aa).

Positions 1–31 (MATKISHLVSLLLSLLLLLLFISSQVGFTEA) are cleaved as a signal peptide. Residues 29–74 (TEAKRDERKKMSSPPIPSPLIPSPPIPPPPPRFYVPPSKSRRGKGP) are disordered. Residues 42-62 (PPIPSPLIPSPPIPPPPPRFY) are compositionally biased toward pro residues. Positions 60-74 (RFYVPPSKSRRGKGP) match the SCOOP motif motif. The short motif at 66-68 (SKS) is the SxS motif essential for MIK2 binding element.

This sequence belongs to the serine rich endogenous peptide (SCOOP) phytocytokine family. Interacts with MIK2 (via extracellular leucine-rich repeat domain); this interaction triggers the formation of complex between MIK2 and the BAK1/SERK3 and SERK4 coreceptors, and subsequent BAK1 activation by phosphorylation.

The protein resides in the cell membrane. Its subcellular location is the secreted. It is found in the extracellular space. The protein localises to the apoplast. In terms of biological role, brassicaceae-specific phytocytokine (plant endogenous peptide released into the apoplast) perceived by MIK2 in a BAK1/SERK3 and SERK4 coreceptors-dependent manner, that modulates various physiological and antimicrobial processes including growth prevention and reactive oxygen species (ROS) response regulation. The protein is Serine rich endogenous peptide 16 of Arabidopsis thaliana (Mouse-ear cress).